Reading from the N-terminus, the 179-residue chain is MKSSLKPVEKYAYSIFEIAKEEKKLDLYKHNLETINSIIEEVPAFFEAVGDPARDRNERKQIVIKNLEGEIDIYLISLIDLLIDVKSVKLLKKIVLKALDFVNEALSVKKVLITTAYELTKNQIDRLLQSLKKKYVCEKIEPIVVVDKSIIGGLSINFESQVLDNSLKTKLFNIVKKVN.

Belongs to the ATPase delta chain family. F-type ATPases have 2 components, F(1) - the catalytic core - and F(0) - the membrane proton channel. F(1) has five subunits: alpha(3), beta(3), gamma(1), delta(1), epsilon(1). F(0) has three main subunits: a(1), b(2) and c(10-14). The alpha and beta chains form an alternating ring which encloses part of the gamma chain. F(1) is attached to F(0) by a central stalk formed by the gamma and epsilon chains, while a peripheral stalk is formed by the delta and b chains.

Its subcellular location is the cell membrane. Functionally, f(1)F(0) ATP synthase produces ATP from ADP in the presence of a proton or sodium gradient. F-type ATPases consist of two structural domains, F(1) containing the extramembraneous catalytic core and F(0) containing the membrane proton channel, linked together by a central stalk and a peripheral stalk. During catalysis, ATP synthesis in the catalytic domain of F(1) is coupled via a rotary mechanism of the central stalk subunits to proton translocation. Its function is as follows. This protein is part of the stalk that links CF(0) to CF(1). It either transmits conformational changes from CF(0) to CF(1) or is implicated in proton conduction. In Ureaplasma parvum serovar 3 (strain ATCC 27815 / 27 / NCTC 11736), this protein is ATP synthase subunit delta.